Consider the following 152-residue polypeptide: Transcriptional repressor NrdR (152 aa).

Residues 3–34 fold into a zinc finger; sequence CPYCNASDTKVIDSRLAAEGAQVRRRRSCNSC. In terms of domain architecture, ATP-cone spans 49-139; it reads PRIIKSSGKI…VYRDFQDIDA (91 aa).

It belongs to the NrdR family. Zn(2+) is required as a cofactor.

Negatively regulates transcription of bacterial ribonucleotide reductase nrd genes and operons by binding to NrdR-boxes. The chain is Transcriptional repressor NrdR from Psychrobacter arcticus (strain DSM 17307 / VKM B-2377 / 273-4).